Reading from the N-terminus, the 937-residue chain is Glycine dehydrogenase (decarboxylating) (937 aa).

The residue at position 686 (lysine 686) is an N6-(pyridoxal phosphate)lysine.

The protein belongs to the GcvP family. As to quaternary structure, the glycine cleavage system is composed of four proteins: P, T, L and H. It depends on pyridoxal 5'-phosphate as a cofactor.

It carries out the reaction N(6)-[(R)-lipoyl]-L-lysyl-[glycine-cleavage complex H protein] + glycine + H(+) = N(6)-[(R)-S(8)-aminomethyldihydrolipoyl]-L-lysyl-[glycine-cleavage complex H protein] + CO2. Its function is as follows. The glycine cleavage system catalyzes the degradation of glycine. The P protein binds the alpha-amino group of glycine through its pyridoxal phosphate cofactor; CO(2) is released and the remaining methylamine moiety is then transferred to the lipoamide cofactor of the H protein. The protein is Glycine dehydrogenase (decarboxylating) of Mesorhizobium japonicum (strain LMG 29417 / CECT 9101 / MAFF 303099) (Mesorhizobium loti (strain MAFF 303099)).